A 444-amino-acid polypeptide reads, in one-letter code: Adenylosuccinate synthetase (444 aa).

Residues 12 to 18 (GDEGKGK) and 40 to 42 (GHT) each bind GTP. Aspartate 13 serves as the catalytic Proton acceptor. Mg(2+) contacts are provided by aspartate 13 and glycine 40. IMP contacts are provided by residues 13–16 (DEGK), 38–41 (NAGH), threonine 128, arginine 142, glutamine 223, threonine 238, and arginine 302. Histidine 41 functions as the Proton donor in the catalytic mechanism. 298 to 304 (TTTGRRR) lines the substrate pocket. GTP-binding positions include arginine 304, 330–332 (KLD), and 412–414 (SLG).

It belongs to the adenylosuccinate synthetase family. Homodimer. Requires Mg(2+) as cofactor.

Its subcellular location is the cytoplasm. It carries out the reaction IMP + L-aspartate + GTP = N(6)-(1,2-dicarboxyethyl)-AMP + GDP + phosphate + 2 H(+). Its pathway is purine metabolism; AMP biosynthesis via de novo pathway; AMP from IMP: step 1/2. In terms of biological role, plays an important role in the de novo pathway of purine nucleotide biosynthesis. Catalyzes the first committed step in the biosynthesis of AMP from IMP. In Synechococcus sp. (strain ATCC 27144 / PCC 6301 / SAUG 1402/1) (Anacystis nidulans), this protein is Adenylosuccinate synthetase.